The primary structure comprises 99 residues: Cystatin (99 aa).

The Cystatin domain maps to 3-99 (GGLSPRSVSD…EEKLCGFQVW (97 aa)). The Secondary area of contact signature appears at 47–51 (QSVAG). A disulfide bridge connects residues C65 and C81.

Belongs to the cystatin family. As to expression, expressed by the venom gland.

The protein resides in the secreted. Inhibits various C1 cysteine proteases including cathepsin L (Ki is 0.1 nM), papain (Ki is 0.19 nM), cathepsin S (Ki is 1.2 nM), and cathepsin B (Ki is 2.5 nM). This protein has no toxic activity and its function in the venom is unknown. It may play a role as housekeeping or regulatory protein. The chain is Cystatin from Naja atra (Chinese cobra).